Reading from the N-terminus, the 449-residue chain is Xaa-Pro dipeptidase (449 aa).

Residues Asp-246, Asp-257, His-345, Glu-390, and Glu-429 each coordinate Mn(2+).

It belongs to the peptidase M24B family. Bacterial-type prolidase subfamily. Mn(2+) serves as cofactor.

The catalysed reaction is Xaa-L-Pro dipeptide + H2O = an L-alpha-amino acid + L-proline. In terms of biological role, splits dipeptides with a prolyl residue in the C-terminal position. The polypeptide is Xaa-Pro dipeptidase (Yersinia enterocolitica serotype O:8 / biotype 1B (strain NCTC 13174 / 8081)).